Here is an 83-residue protein sequence, read N- to C-terminus: MSVRIRLKRMGAKKRPYYRIVVMDSASPRDGRAIEELGYYHPVEKQNQVKINENKFRDWIGKGAIPSDTVKKILNKNNFKVES.

This sequence belongs to the bacterial ribosomal protein bS16 family.

In Borrelia turicatae (strain 91E135), this protein is Small ribosomal subunit protein bS16.